A 338-amino-acid chain; its full sequence is Outer membrane transporter protein TsaT (338 aa).

The N-terminal stretch at 1–22 (MNFRRRLCTAALIAALPLASQA) is a signal peptide.

As to quaternary structure, part of a two-component transport system composed of TsaT and TsaS.

Its subcellular location is the cell outer membrane. In terms of biological role, involved in the uptake of p-toluenesulphonate (TSA). Forms a large, general diffusion pore with a preference for anions. The sequence is that of Outer membrane transporter protein TsaT (tsaT) from Comamonas testosteroni (Pseudomonas testosteroni).